The primary structure comprises 96 residues: Large ribosomal subunit protein uL23 (96 aa).

It belongs to the universal ribosomal protein uL23 family. In terms of assembly, part of the 50S ribosomal subunit. Contacts protein L29, and trigger factor when it is bound to the ribosome.

Functionally, one of the early assembly proteins it binds 23S rRNA. One of the proteins that surrounds the polypeptide exit tunnel on the outside of the ribosome. Forms the main docking site for trigger factor binding to the ribosome. This is Large ribosomal subunit protein uL23 from Vesicomyosocius okutanii subsp. Calyptogena okutanii (strain HA).